Here is a 570-residue protein sequence, read N- to C-terminus: FERM domain-containing protein 5 (570 aa).

An FERM domain is found at 17–298; that stretch reads YSCTVRLLDD…ENQAFYKLEK (282 aa). Positions 308–353 are interaction with ROCK1; the sequence is SNLFFKGSRFRYSGRVAKEVMESSAKIKREPPEIHRAGMVPSRSCP. The interval 344–367 is disordered; the sequence is AGMVPSRSCPSITHGPRLSSVPRT. The residue at position 375 (Ser-375) is a Phosphoserine. Residues 385-407 are disordered; the sequence is DSAHSTPVRSTSHGDTFLPHVRS. Residues 388 to 398 show a composition bias toward polar residues; the sequence is HSTPVRSTSHG. Residues 504-524 form a helical membrane-spanning segment; it reads LLLVTMGLLFVLLLLLIILTE.

As to quaternary structure, interacts with CTNND1. Interacts with ITGB5 (via cytoplasmic domain) and ROCK1.

Its subcellular location is the membrane. It is found in the cell junction. The protein resides in the adherens junction. Functionally, may be involved in regulation of cell migration. May regulate cell-matrix interactions via its interaction with ITGB5 and modifying ITGB5 cytoplasmic tail interactions such as with FERMT2 and TLN1. May regulate ROCK1 kinase activity possibly involved in regulation of actin stress fiber formation. The polypeptide is FERM domain-containing protein 5 (FRMD5) (Homo sapiens (Human)).